Reading from the N-terminus, the 305-residue chain is UDP-3-O-acyl-N-acetylglucosamine deacetylase (305 aa).

3 residues coordinate Zn(2+): His79, His238, and Asp242. Catalysis depends on His265, which acts as the Proton donor.

It belongs to the LpxC family. Requires Zn(2+) as cofactor.

The catalysed reaction is a UDP-3-O-[(3R)-3-hydroxyacyl]-N-acetyl-alpha-D-glucosamine + H2O = a UDP-3-O-[(3R)-3-hydroxyacyl]-alpha-D-glucosamine + acetate. The protein operates within glycolipid biosynthesis; lipid IV(A) biosynthesis; lipid IV(A) from (3R)-3-hydroxytetradecanoyl-[acyl-carrier-protein] and UDP-N-acetyl-alpha-D-glucosamine: step 2/6. In terms of biological role, catalyzes the hydrolysis of UDP-3-O-myristoyl-N-acetylglucosamine to form UDP-3-O-myristoylglucosamine and acetate, the committed step in lipid A biosynthesis. The sequence is that of UDP-3-O-acyl-N-acetylglucosamine deacetylase from Escherichia coli O45:K1 (strain S88 / ExPEC).